A 360-amino-acid chain; its full sequence is Nucleoporin SEH1 (360 aa).

WD repeat units follow at residues 10–49 (DHKD…DWHC), 55–96 (THSG…SNDK), 111–152 (DSRT…NLSQ), 160–210 (SCKL…RKYA), 217–258 (SVSD…KELS), and 276–315 (NHNS…NWKC).

This sequence belongs to the WD repeat SEC13 family. As to quaternary structure, component of the Nup107-160 subcomplex of the nuclear pore complex (NPC). The Nup107-160 subcomplex includes NUP160, NUP133, NUP107, NUP98, NUP85, NUP43, NUP37, SEH1 and SEC13. Component of the GATOR2 subcomplex, composed of MIOS, SEC13, SEH1L, WDR24 and WDR59. The GATOR2 complex interacts with CASTOR1 and CASTOR2; the interaction is negatively regulated by arginine. The GATOR2 complex interacts with SESN1, SESN2 and SESN3; the interaction is negatively regulated by amino acids.

Its subcellular location is the chromosome. It localises to the centromere. It is found in the kinetochore. The protein resides in the nucleus. The protein localises to the nuclear pore complex. Its subcellular location is the lysosome membrane. The GATOR2 complex is negatively regulated by the upstream amino acid sensors CASTOR1 and SESN2, which sequester the GATOR2 complex in absence of amino acids. In the presence of abundant amino acids, GATOR2 is released from CASTOR1 and SESN2 and activated. In terms of biological role, component of the Nup107-160 subcomplex of the nuclear pore complex (NPC). The Nup107-160 subcomplex is required for the assembly of a functional NPC. The Nup107-160 subcomplex is also required for normal kinetochore microtubule attachment, mitotic progression and chromosome segregation. This subunit plays a role in recruitment of the Nup107-160 subcomplex to the kinetochore. Functionally, as a component of the GATOR2 complex, functions as an activator of the amino acid-sensing branch of the mTORC1 signaling pathway. The GATOR2 complex indirectly activates mTORC1 through the inhibition of the GATOR1 subcomplex. GATOR2 probably acts as an E3 ubiquitin-protein ligase toward GATOR1. In the presence of abundant amino acids, the GATOR2 complex mediates ubiquitination of the NPRL2 core component of the GATOR1 complex, leading to GATOR1 inactivation. In the absence of amino acids, GATOR2 is inhibited, activating the GATOR1 complex. The sequence is that of Nucleoporin SEH1 (seh1l) from Xenopus tropicalis (Western clawed frog).